Reading from the N-terminus, the 157-residue chain is Trafficking protein particle complex subunit 6b (157 aa).

The protein belongs to the TRAPP small subunits family. BET3 subfamily. Homodimer. Part of a TRAPP complex.

The protein resides in the golgi apparatus. The protein localises to the cis-Golgi network. It is found in the endoplasmic reticulum. Its function is as follows. Component of a transport protein particle (TRAPP) complex that may function in specific stages of inter-organelle traffic. Specifically involved in the early development of neural circuitry, likely by controlling the frequency and amplitude of intracellular calcium transients implicated in the regulation of neuron differentiation and survival. The polypeptide is Trafficking protein particle complex subunit 6b (Danio rerio (Zebrafish)).